Consider the following 142-residue polypeptide: Small heat shock protein IbpB (142 aa).

The sHSP domain occupies 26–137 (AGESQSFPPY…AAQRIAISER (112 aa)).

Belongs to the small heat shock protein (HSP20) family. In terms of assembly, homodimer. Forms homomultimers of about 100-150 subunits at optimal growth temperatures. Conformation changes to oligomers at high temperatures or high ionic concentrations. The decrease in size of the multimers is accompanied by an increase in chaperone activity.

It localises to the cytoplasm. In terms of biological role, associates with aggregated proteins, together with IbpA, to stabilize and protect them from irreversible denaturation and extensive proteolysis during heat shock and oxidative stress. Aggregated proteins bound to the IbpAB complex are more efficiently refolded and reactivated by the ATP-dependent chaperone systems ClpB and DnaK/DnaJ/GrpE. Its activity is ATP-independent. The protein is Small heat shock protein IbpB of Escherichia coli O7:K1 (strain IAI39 / ExPEC).